The primary structure comprises 675 residues: Putative elongation factor TypA-like SVR3, chloroplastic (675 aa).

Residues 1 to 58 (MELSLSTSSASPAVLRRQASPLLHKQQVLGVSFASALKPGGGALRFPSRRPLPRPITC) constitute a chloroplast transit peptide. Positions 43–76 (ALRFPSRRPLPRPITCSASPSTAEPASEVKKKQL) are disordered. Low complexity predominate over residues 59 to 68 (SASPSTAEPA). A tr-type G domain is found at 80–275 (DNVRNIAIVA…AIIRCVPGPN (196 aa)).

The protein belongs to the TRAFAC class translation factor GTPase superfamily. Classic translation factor GTPase family. BipA subfamily.

Its subcellular location is the plastid. The protein resides in the chloroplast. Functionally, putative chloroplastic elongation factor involved in response to chilling stress. Required for proper chloroplast rRNA processing and/or translation at low temperature. Involved in plastid protein homeostasis. The sequence is that of Putative elongation factor TypA-like SVR3, chloroplastic (SVR3) from Arabidopsis thaliana (Mouse-ear cress).